The sequence spans 372 residues: Chaperone protein DnaJ (372 aa).

The J domain occupies 5–70; sequence DYYEVLGVAK…DKRAAYDQFG (66 aa). A CR-type zinc finger spans residues 133–211; that stretch reads GTETKIRIPT…CHGEGRVKKH (79 aa). Residues Cys146, Cys149, Cys163, Cys166, Cys185, Cys188, Cys199, and Cys202 each coordinate Zn(2+). CXXCXGXG motif repeat units lie at residues 146–153, 163–170, 185–192, and 199–206; these read CGTCHGSG, CSACGGHG, CPRCGGTG, and CPSCHGEG.

It belongs to the DnaJ family. In terms of assembly, homodimer. Zn(2+) serves as cofactor.

The protein localises to the cytoplasm. In terms of biological role, participates actively in the response to hyperosmotic and heat shock by preventing the aggregation of stress-denatured proteins and by disaggregating proteins, also in an autonomous, DnaK-independent fashion. Unfolded proteins bind initially to DnaJ; upon interaction with the DnaJ-bound protein, DnaK hydrolyzes its bound ATP, resulting in the formation of a stable complex. GrpE releases ADP from DnaK; ATP binding to DnaK triggers the release of the substrate protein, thus completing the reaction cycle. Several rounds of ATP-dependent interactions between DnaJ, DnaK and GrpE are required for fully efficient folding. Also involved, together with DnaK and GrpE, in the DNA replication of plasmids through activation of initiation proteins. The protein is Chaperone protein DnaJ of Thiobacillus denitrificans (strain ATCC 25259 / T1).